The chain runs to 861 residues: DNA mismatch repair protein MutS (861 aa).

Residue 613-620 coordinates ATP; that stretch reads GPNMGGKS.

The protein belongs to the DNA mismatch repair MutS family.

In terms of biological role, this protein is involved in the repair of mismatches in DNA. It is possible that it carries out the mismatch recognition step. This protein has a weak ATPase activity. The protein is DNA mismatch repair protein MutS of Dichelobacter nodosus (strain VCS1703A).